Here is a 144-residue protein sequence, read N- to C-terminus: L-fucose mutarotase (144 aa).

The active-site Proton donor is His-22. Substrate contacts are provided by residues Asp-30, Arg-109, and 131–133; that span reads YGN.

This sequence belongs to the RbsD / FucU family. FucU mutarotase subfamily. As to quaternary structure, homodecamer.

The protein resides in the cytoplasm. It carries out the reaction alpha-L-fucose = beta-L-fucose. It functions in the pathway carbohydrate metabolism; L-fucose metabolism. Involved in the anomeric conversion of L-fucose. This is L-fucose mutarotase from Haemophilus influenzae (strain 86-028NP).